We begin with the raw amino-acid sequence, 258 residues long: Deoxyribose-phosphate aldolase (258 aa).

Asp102 (proton donor/acceptor) is an active-site residue. The active-site Schiff-base intermediate with acetaldehyde is Lys165. Catalysis depends on Lys199, which acts as the Proton donor/acceptor.

The protein belongs to the DeoC/FbaB aldolase family. DeoC type 2 subfamily.

The protein resides in the cytoplasm. It carries out the reaction 2-deoxy-D-ribose 5-phosphate = D-glyceraldehyde 3-phosphate + acetaldehyde. It participates in carbohydrate degradation; 2-deoxy-D-ribose 1-phosphate degradation; D-glyceraldehyde 3-phosphate and acetaldehyde from 2-deoxy-alpha-D-ribose 1-phosphate: step 2/2. Its function is as follows. Catalyzes a reversible aldol reaction between acetaldehyde and D-glyceraldehyde 3-phosphate to generate 2-deoxy-D-ribose 5-phosphate. This chain is Deoxyribose-phosphate aldolase, found in Vibrio parahaemolyticus serotype O3:K6 (strain RIMD 2210633).